We begin with the raw amino-acid sequence, 358 residues long: DNA polymerase IV (358 aa).

The UmuC domain maps to 4-185 (IIHIDMDCYF…LSLRKIPGVG (182 aa)). Mg(2+) is bound by residues Asp-8 and Asp-103. Glu-104 is a catalytic residue.

Belongs to the DNA polymerase type-Y family. Monomer. Mg(2+) is required as a cofactor.

It localises to the cytoplasm. It carries out the reaction DNA(n) + a 2'-deoxyribonucleoside 5'-triphosphate = DNA(n+1) + diphosphate. Poorly processive, error-prone DNA polymerase involved in untargeted mutagenesis. Copies undamaged DNA at stalled replication forks, which arise in vivo from mismatched or misaligned primer ends. These misaligned primers can be extended by PolIV. Exhibits no 3'-5' exonuclease (proofreading) activity. May be involved in translesional synthesis, in conjunction with the beta clamp from PolIII. The chain is DNA polymerase IV from Shewanella baltica (strain OS185).